We begin with the raw amino-acid sequence, 138 residues long: Protein Turandot B (138 aa).

An N-terminal signal peptide occupies residues Met-1–Ala-21.

It belongs to the Turandot family.

It localises to the secreted. Functionally, a humoral factor that may play a role in stress tolerance. The chain is Protein Turandot B from Drosophila melanogaster (Fruit fly).